The sequence spans 452 residues: Phosphoglucosamine mutase (452 aa).

The Phosphoserine intermediate role is filled by serine 88. Residues serine 88, aspartate 234, aspartate 236, and aspartate 238 each contribute to the Mg(2+) site. Serine 88 carries the post-translational modification Phosphoserine.

This sequence belongs to the phosphohexose mutase family. The cofactor is Mg(2+). Post-translationally, activated by phosphorylation.

It carries out the reaction alpha-D-glucosamine 1-phosphate = D-glucosamine 6-phosphate. Catalyzes the conversion of glucosamine-6-phosphate to glucosamine-1-phosphate. In Methanococcus aeolicus (strain ATCC BAA-1280 / DSM 17508 / OCM 812 / Nankai-3), this protein is Phosphoglucosamine mutase.